Consider the following 234-residue polypeptide: 5'-methylthioadenosine/S-adenosylhomocysteine nucleosidase (234 aa).

Residue glutamate 12 is the Proton acceptor of the active site. Substrate is bound by residues glycine 78, isoleucine 152, and 173–174 (ME). The Proton donor role is filled by aspartate 197.

This sequence belongs to the PNP/UDP phosphorylase family. MtnN subfamily.

It catalyses the reaction S-adenosyl-L-homocysteine + H2O = S-(5-deoxy-D-ribos-5-yl)-L-homocysteine + adenine. The enzyme catalyses S-methyl-5'-thioadenosine + H2O = 5-(methylsulfanyl)-D-ribose + adenine. The catalysed reaction is 5'-deoxyadenosine + H2O = 5-deoxy-D-ribose + adenine. It functions in the pathway amino-acid biosynthesis; L-methionine biosynthesis via salvage pathway; S-methyl-5-thio-alpha-D-ribose 1-phosphate from S-methyl-5'-thioadenosine (hydrolase route): step 1/2. Catalyzes the irreversible cleavage of the glycosidic bond in both 5'-methylthioadenosine (MTA) and S-adenosylhomocysteine (SAH/AdoHcy) to adenine and the corresponding thioribose, 5'-methylthioribose and S-ribosylhomocysteine, respectively. Also cleaves 5'-deoxyadenosine, a toxic by-product of radical S-adenosylmethionine (SAM) enzymes, into 5-deoxyribose and adenine. This is 5'-methylthioadenosine/S-adenosylhomocysteine nucleosidase from Desulfotalea psychrophila (strain LSv54 / DSM 12343).